Reading from the N-terminus, the 434-residue chain is MTAPASNITADKNAFFGADLAAADRDIFDRIGLELNRQQNQIELIASENIVSRAVLEAQGSILTNKYAEGYPGKRYYGGCEYVDEIETIAIERAKALFGAGFANVQPHSGSQANQSVFMALLQPGDTFLGMDLAAGGHLTHGSPANQSGKWFKPVSYTVRQQDQLIDYDAVEEVAQASKPKLIIAGGSAYSRQIDFARFRQIADSVGAYLMVDMAHFAGLVAGGVFPSPIPHAHVVTTTTHKTLRGPRGGMVLTNDEAIIKKVNSAVFPGLQGGPLEHVIAAKAVAFGEALQPAFKAYAQAVIDNARALAEALQTQGVNIVSGGTDSHLMLVDLRPKGVTGRDAEHSLERAHMTCNKNGVPFDTASFAVTSGIRLGTPAGTTRGFGAAEFTRVGQLIGEVVNGLAANGVDGNGAVEAKVREEVLALTARFPIYN.

(6S)-5,6,7,8-tetrahydrofolate contacts are provided by residues leucine 133 and 137 to 139 (GHL). At lysine 242 the chain carries N6-(pyridoxal phosphate)lysine.

This sequence belongs to the SHMT family. Homodimer. It depends on pyridoxal 5'-phosphate as a cofactor.

The protein resides in the cytoplasm. The enzyme catalyses (6R)-5,10-methylene-5,6,7,8-tetrahydrofolate + glycine + H2O = (6S)-5,6,7,8-tetrahydrofolate + L-serine. The protein operates within one-carbon metabolism; tetrahydrofolate interconversion. It participates in amino-acid biosynthesis; glycine biosynthesis; glycine from L-serine: step 1/1. In terms of biological role, catalyzes the reversible interconversion of serine and glycine with tetrahydrofolate (THF) serving as the one-carbon carrier. This reaction serves as the major source of one-carbon groups required for the biosynthesis of purines, thymidylate, methionine, and other important biomolecules. Also exhibits THF-independent aldolase activity toward beta-hydroxyamino acids, producing glycine and aldehydes, via a retro-aldol mechanism. The protein is Serine hydroxymethyltransferase of Caulobacter sp. (strain K31).